The primary structure comprises 524 residues: Bifunctional purine biosynthesis protein PurH (524 aa).

The MGS-like domain occupies 1-149 (MSDPLIKRAL…KNNESVTVLT (149 aa)).

This sequence belongs to the PurH family.

The catalysed reaction is (6R)-10-formyltetrahydrofolate + 5-amino-1-(5-phospho-beta-D-ribosyl)imidazole-4-carboxamide = 5-formamido-1-(5-phospho-D-ribosyl)imidazole-4-carboxamide + (6S)-5,6,7,8-tetrahydrofolate. The enzyme catalyses IMP + H2O = 5-formamido-1-(5-phospho-D-ribosyl)imidazole-4-carboxamide. Its pathway is purine metabolism; IMP biosynthesis via de novo pathway; 5-formamido-1-(5-phospho-D-ribosyl)imidazole-4-carboxamide from 5-amino-1-(5-phospho-D-ribosyl)imidazole-4-carboxamide (10-formyl THF route): step 1/1. It functions in the pathway purine metabolism; IMP biosynthesis via de novo pathway; IMP from 5-formamido-1-(5-phospho-D-ribosyl)imidazole-4-carboxamide: step 1/1. This is Bifunctional purine biosynthesis protein PurH from Chlorobium luteolum (strain DSM 273 / BCRC 81028 / 2530) (Pelodictyon luteolum).